A 925-amino-acid chain; its full sequence is Probable dipeptidyl-aminopeptidase B (925 aa).

The interval 1–104 is disordered; sequence MTPYRDVPPV…RHAQKKGPGM (104 aa). Residues 1 to 110 are Cytoplasmic-facing; it reads MTPYRDVPPV…GPGMDRGMRR (110 aa). Residues 31–40 show a composition bias toward low complexity; sequence ESGSSVSTTS. Basic and acidic residues predominate over residues 55 to 72; it reads LSEKQPRGDDNEDALKDE. Residues 111 to 131 form a helical; Signal-anchor for type II membrane protein membrane-spanning segment; sequence ALLIAAGLLVSAWVAGLFVYI. At 132–925 the chain is on the vacuolar side; it reads ATKSYKPASA…PKPNGKRRAA (794 aa). A glycan (N-linked (GlcNAc...) asparagine) is linked at asparagine 369. Serine 773 (charge relay system) is an active-site residue. N-linked (GlcNAc...) asparagine glycosylation is present at asparagine 832. Residues aspartate 850 and histidine 883 each act as charge relay system in the active site.

It belongs to the peptidase S9B family.

Its subcellular location is the vacuole membrane. It catalyses the reaction Release of an N-terminal dipeptide, Xaa-Yaa-|-Zaa-, from a polypeptide, preferentially when Yaa is Pro, provided Zaa is neither Pro nor hydroxyproline.. In terms of biological role, type IV dipeptidyl-peptidase which removes N-terminal dipeptides sequentially from polypeptides having unsubstituted N-termini provided that the penultimate residue is proline. This is Probable dipeptidyl-aminopeptidase B (DAPB) from Chaetomium globosum (strain ATCC 6205 / CBS 148.51 / DSM 1962 / NBRC 6347 / NRRL 1970) (Soil fungus).